The primary structure comprises 131 residues: Global transcriptional regulator Spx (131 aa).

A disulfide bond links Cys-10 and Cys-13.

It belongs to the ArsC family. Spx subfamily. As to quaternary structure, interacts with the C-terminal domain of the alpha subunit of the RNAP.

The protein localises to the cytoplasm. In terms of biological role, global transcriptional regulator that plays a key role in stress response and exerts either positive or negative regulation of genes. Acts by interacting with the C-terminal domain of the alpha subunit of the RNA polymerase (RNAP). This interaction can enhance binding of RNAP to the promoter region of target genes and stimulate their transcription, or block interaction of RNAP with activator. The chain is Global transcriptional regulator Spx from Shouchella clausii (strain KSM-K16) (Alkalihalobacillus clausii).